We begin with the raw amino-acid sequence, 241 residues long: Ubiquinone biosynthesis O-methyltransferase (241 aa).

S-adenosyl-L-methionine is bound by residues arginine 46, glycine 66, aspartate 87, and methionine 131.

The protein belongs to the methyltransferase superfamily. UbiG/COQ3 family.

The catalysed reaction is a 3-demethylubiquinol + S-adenosyl-L-methionine = a ubiquinol + S-adenosyl-L-homocysteine + H(+). The enzyme catalyses a 3-(all-trans-polyprenyl)benzene-1,2-diol + S-adenosyl-L-methionine = a 2-methoxy-6-(all-trans-polyprenyl)phenol + S-adenosyl-L-homocysteine + H(+). It functions in the pathway cofactor biosynthesis; ubiquinone biosynthesis. O-methyltransferase that catalyzes the 2 O-methylation steps in the ubiquinone biosynthetic pathway. The sequence is that of Ubiquinone biosynthesis O-methyltransferase from Bordetella pertussis (strain Tohama I / ATCC BAA-589 / NCTC 13251).